Consider the following 486-residue polypeptide: NADH-ubiquinone oxidoreductase chain 4 (486 aa).

13 helical membrane-spanning segments follow: residues 26–46 (HFYL…YINF), 76–96 (GLLF…VLLI), 113–132 (LYYT…FWAL), 134–156 (YISF…HIYG), 165–185 (FYVL…IVVI), 209–231 (IIWL…HVWL), 239–259 (PLAG…YAIL), 271–291 (ILYT…TSLA), 298–318 (LKVI…LGVC), 329–349 (IVLG…VGGI), 372–392 (LATY…TGNF), 407–427 (PIIG…QLKL), and 452–472 (FIMN…QIMY).

Belongs to the complex I subunit 4 family. Complex I is composed of 37 different subunits.

The protein resides in the mitochondrion membrane. The catalysed reaction is a ubiquinone + NADH + 5 H(+)(in) = a ubiquinol + NAD(+) + 4 H(+)(out). Its function is as follows. Core subunit of the mitochondrial membrane respiratory chain NADH dehydrogenase (Complex I) that is believed to belong to the minimal assembly required for catalysis. Complex I functions in the transfer of electrons from NADH to the respiratory chain. The immediate electron acceptor for the enzyme is believed to be ubiquinone. This Yarrowia lipolytica (strain CLIB 122 / E 150) (Yeast) protein is NADH-ubiquinone oxidoreductase chain 4 (ND4).